The sequence spans 1656 residues: Probable phospholipid-transporting ATPase DNF3 (1656 aa).

Over 1–164 (MGIADGQRRR…PRQLYAQFSK (164 aa)) the chain is Lumenal. The tract at residues 36 to 74 (ELEDINESKTFSGSDNNDKDDRDETSGNYAAEEDYEMEE) is disordered. A compositionally biased stretch (basic and acidic residues) spans 51–60 (NNDKDDRDET). A helical membrane pass occupies residues 165-185 (LANTYFFIVAVLQMIPGWSTT). The Cytoplasmic segment spans residues 186–451 (GTYTTIIPLC…RTKAPKLQRK (266 aa)). The chain crosses the membrane as a helical span at residues 452-472 (INMIIVFMVFVVATISLFSYL). Over 473 to 495 (GHVLHKKKYIDQNKAWYLFQADA) the chain is Lumenal. The chain crosses the membrane as a helical span at residues 496–516 (GVAPTIMSFIIMYNTVIPLSL). Residues 517–1157 (YVTMEIIKVV…ISKMNAVSQE (641 aa)) lie on the Cytoplasmic side of the membrane. The active-site 4-aspartylphosphate intermediate is aspartate 566. Aspartate 566, lysine 567, and threonine 568 together coordinate ATP. Aspartate 566 lines the Mg(2+) pocket. Threonine 568 is a Mg(2+) binding site. Position 627 is a phosphoserine (serine 627). Residues glutamate 765, phenylalanine 813, serine 815, lysine 818, lysine 838, arginine 1034, threonine 1035, threonine 1114, glycine 1115, aspartate 1116, 1167–1174 (VVVIDGAT), arginine 1202, and lysine 1208 each bind ATP. Residues 1158 to 1178 (VDSGNIAHCVVVIDGATMAMF) form a helical membrane-spanning segment. Over 1179-1318 (EGNPTYMSVF…MFSGSSLYEP (140 aa)) the chain is Lumenal. Aspartate 1229 serves as a coordination point for Mg(2+). Asparagine 1232 and aspartate 1233 together coordinate ATP. Residues 1319 to 1339 (WSLSMFNTLFTSLPVLCIGMF) form a helical membrane-spanning segment. The Cytoplasmic portion of the chain corresponds to 1340 to 1365 (EKDLKPMTLLTVPELYSYGRLSQGFN). The chain crosses the membrane as a helical span at residues 1366 to 1386 (WLIFMEWVILATTNSLIITFL). Residues 1387–1395 (NVVMWGMSS) lie on the Lumenal side of the membrane. Residues 1396–1416 (LSDNTMYPLGLINFTAIVALI) traverse the membrane as a helical segment. Residues 1417 to 1432 (NVKSQFVEMHNRNWLA) are Cytoplasmic-facing. A helical transmembrane segment spans residues 1433–1453 (FTSVVLSCGGWLVWCCALPIL). At 1454–1473 (NNTDQIYDVAYGFYNHFGKD) the chain is on the lumenal side. A helical membrane pass occupies residues 1474–1494 (ITFWCTSLVLALLPITLDIVY). Residues 1495 to 1656 (KTFKVMIWPS…IIQARLKDLE (162 aa)) lie on the Cytoplasmic side of the membrane. A disordered region spans residues 1554–1576 (PRTNSRASAKTHNSSIYSMSNGN).

It belongs to the cation transport ATPase (P-type) (TC 3.A.3) family. Type IV subfamily. As to quaternary structure, component of a flippase complex consisting of DNF3 and YNR048W/CRF1. Interacts with YNR048W/CRF1; the interaction is direct and required for proper expression and endoplasmic reticulum (ER) export of either partner. The cofactor is Mg(2+).

It localises to the golgi apparatus. Its subcellular location is the trans-Golgi network membrane. The protein resides in the endosome membrane. It carries out the reaction ATP + H2O + phospholipidSide 1 = ADP + phosphate + phospholipidSide 2.. The catalysed reaction is a 1,2-diacyl-sn-glycero-3-phosphocholine(out) + ATP + H2O = a 1,2-diacyl-sn-glycero-3-phosphocholine(in) + ADP + phosphate + H(+). The enzyme catalyses a 1,2-diacyl-sn-glycero-3-phosphoethanolamine(out) + ATP + H2O = a 1,2-diacyl-sn-glycero-3-phosphoethanolamine(in) + ADP + phosphate + H(+). Functionally, catalytic component of a P4-ATPase flippase complex which catalyzes the hydrolysis of ATP coupled to the transport of phosphatidylcholine and small amounts of phosphatidylethanolamine from the lumen to the cytosolic leaflet of the trans-Golgi network and ensures the maintenance of asymmetric distribution of phospholipids. May be involved in transport from early endosomes to the trans-Golgi network (TGN). The polypeptide is Probable phospholipid-transporting ATPase DNF3 (DNF3) (Saccharomyces cerevisiae (strain ATCC 204508 / S288c) (Baker's yeast)).